We begin with the raw amino-acid sequence, 184 residues long: Ethylene-responsive transcription factor ERF010 (184 aa).

The segment at residues 20-77 is a DNA-binding region (AP2/ERF); sequence PYKGIRMRKWGKWVAEIREPNKRSRLWLGSYSTPEAAARAYDTAVFYLRGPTARLNFP. The disordered stretch occupies residues 123 to 184; sequence QNRDSDVDNK…SSDEEWESKH (62 aa). Residues 161-172 are compositionally biased toward basic and acidic residues; the sequence is LLDRVDLNKLPD. Residues 174-184 show a composition bias toward acidic residues; that stretch reads ESSDEEWESKH.

This sequence belongs to the AP2/ERF transcription factor family. ERF subfamily.

It localises to the nucleus. Functionally, probably acts as a transcriptional activator. Binds to the GCC-box pathogenesis-related promoter element. May be involved in the regulation of gene expression by stress factors and by components of stress signal transduction pathways. The polypeptide is Ethylene-responsive transcription factor ERF010 (ERF010) (Arabidopsis thaliana (Mouse-ear cress)).